The following is a 179-amino-acid chain: MAKLHDYYRDQVVNELKTKFNYASVMQVPRIEKITLNMGVGEALTDKKLLDNAVADLTAISGQKPLITKARKSVAGFKIRQGYPIGCKVTLRGERMWEFLERLITIAVPRIRDFRGLSAKSFDGRGNYSMGVREQIIFPEIDYDKVDRVRGLDITITTTAKSDEEGQALLAAFNFPFRK.

It belongs to the universal ribosomal protein uL5 family. As to quaternary structure, part of the 50S ribosomal subunit; part of the 5S rRNA/L5/L18/L25 subcomplex. Contacts the 5S rRNA and the P site tRNA. Forms a bridge to the 30S subunit in the 70S ribosome.

Functionally, this is one of the proteins that bind and probably mediate the attachment of the 5S RNA into the large ribosomal subunit, where it forms part of the central protuberance. In the 70S ribosome it contacts protein S13 of the 30S subunit (bridge B1b), connecting the 2 subunits; this bridge is implicated in subunit movement. Contacts the P site tRNA; the 5S rRNA and some of its associated proteins might help stabilize positioning of ribosome-bound tRNAs. This Mannheimia succiniciproducens (strain KCTC 0769BP / MBEL55E) protein is Large ribosomal subunit protein uL5.